Reading from the N-terminus, the 227-residue chain is Small ribosomal subunit protein uS3 (227 aa).

In terms of domain architecture, KH type-2 spans 39-108; it reads IRKFVEERYK…DVTVNVDEVK (70 aa).

Belongs to the universal ribosomal protein uS3 family. In terms of assembly, part of the 30S ribosomal subunit. Forms a tight complex with proteins S10 and S14.

In terms of biological role, binds the lower part of the 30S subunit head. Binds mRNA in the 70S ribosome, positioning it for translation. This Persephonella marina (strain DSM 14350 / EX-H1) protein is Small ribosomal subunit protein uS3.